The chain runs to 710 residues: Prolyl endopeptidase (710 aa).

The residue at position 1 (Met-1) is an N-acetylmethionine. Position 157 is an N6-acetyllysine (Lys-157). Active-site charge relay system residues include Ser-554, Asp-641, and His-680.

It belongs to the peptidase S9A family. In terms of assembly, monomer. Post-translationally, the N-terminus is blocked.

Its subcellular location is the cytoplasm. It catalyses the reaction Hydrolysis of Pro-|-Xaa &gt;&gt; Ala-|-Xaa in oligopeptides.. Its function is as follows. Cleaves peptide bonds on the C-terminal side of prolyl residues within peptides that are up to approximately 30 amino acids long. This is Prolyl endopeptidase (PREP) from Homo sapiens (Human).